The sequence spans 404 residues: L-cysteine:1D-myo-inositol 2-amino-2-deoxy-alpha-D-glucopyranoside ligase (404 aa).

C32 is a binding site for Zn(2+). Residues 32–35 (CGIT), T47, and 70–72 (NIT) each bind L-cysteinyl-5'-AMP. Positions 34–44 (ITPYDSTHLGH) match the 'HIGH' region motif. The 'ERGGDP' region signature appears at 176–181 (ERGGDP). W216 provides a ligand contact to L-cysteinyl-5'-AMP. C220 provides a ligand contact to Zn(2+). 238–240 (GSD) contributes to the L-cysteinyl-5'-AMP binding site. H245 provides a ligand contact to Zn(2+). L-cysteinyl-5'-AMP is bound at residue I272. The 'KMSKS' region motif lies at 278–282 (KMSKS).

The protein belongs to the class-I aminoacyl-tRNA synthetase family. MshC subfamily. Monomer. Zn(2+) serves as cofactor.

The enzyme catalyses 1D-myo-inositol 2-amino-2-deoxy-alpha-D-glucopyranoside + L-cysteine + ATP = 1D-myo-inositol 2-(L-cysteinylamino)-2-deoxy-alpha-D-glucopyranoside + AMP + diphosphate + H(+). In terms of biological role, catalyzes the ATP-dependent condensation of GlcN-Ins and L-cysteine to form L-Cys-GlcN-Ins. The protein is L-cysteine:1D-myo-inositol 2-amino-2-deoxy-alpha-D-glucopyranoside ligase (mshC) of Corynebacterium glutamicum (strain ATCC 13032 / DSM 20300 / JCM 1318 / BCRC 11384 / CCUG 27702 / LMG 3730 / NBRC 12168 / NCIMB 10025 / NRRL B-2784 / 534).